Consider the following 964-residue polypeptide: Translation initiation factor IF-2 (964 aa).

The interval Q49–L357 is disordered. Over residues A62–P85 the composition is skewed to low complexity. Positions A86–R102 are enriched in pro residues. Residues P103–A117 are compositionally biased toward low complexity. A compositionally biased stretch (pro residues) spans P159–G169. Low complexity-rich tracts occupy residues G190–P212 and G242–G251. 2 stretches are compositionally biased toward gly residues: residues G252–G261 and G284–G334. The span at G335 to R346 shows a compositional bias: basic residues. Residues A458–L629 enclose the tr-type G domain. Residues G467–T474 form a G1 region. GTP is bound at residue G467–T474. The G2 stretch occupies residues G492 to A496. Residues D517–G520 form a G3 region. GTP is bound by residues D517–H521 and N571–D574. The G4 stretch occupies residues N571–D574. Residues S607–R609 are G5.

It belongs to the TRAFAC class translation factor GTPase superfamily. Classic translation factor GTPase family. IF-2 subfamily.

Its subcellular location is the cytoplasm. Functionally, one of the essential components for the initiation of protein synthesis. Protects formylmethionyl-tRNA from spontaneous hydrolysis and promotes its binding to the 30S ribosomal subunits. Also involved in the hydrolysis of GTP during the formation of the 70S ribosomal complex. The chain is Translation initiation factor IF-2 from Cutibacterium acnes (strain DSM 16379 / KPA171202) (Propionibacterium acnes).